Here is a 146-residue protein sequence, read N- to C-terminus: Large ribosomal subunit protein uL15 (146 aa).

Positions 1–18 are enriched in basic and acidic residues; that stretch reads MKLHELKPSEGSRKERNR. Residues 1-50 are disordered; that stretch reads MKLHELKPSEGSRKERNRVGRGTGSGNGKTSGRGHKGQKARSGGGVRLGF. Residues 21–31 show a composition bias toward gly residues; that stretch reads RGTGSGNGKTS.

Belongs to the universal ribosomal protein uL15 family. Part of the 50S ribosomal subunit.

Functionally, binds to the 23S rRNA. This is Large ribosomal subunit protein uL15 from Listeria monocytogenes serotype 4b (strain CLIP80459).